Consider the following 152-residue polypeptide: Large ribosomal subunit protein uL30 (152 aa).

Belongs to the universal ribosomal protein uL30 family. In terms of assembly, part of the 50S ribosomal subunit.

This Methanobrevibacter smithii (strain ATCC 35061 / DSM 861 / OCM 144 / PS) protein is Large ribosomal subunit protein uL30.